We begin with the raw amino-acid sequence, 87 residues long: Small ribosomal subunit protein bS18B (87 aa).

Belongs to the bacterial ribosomal protein bS18 family. Part of the 30S ribosomal subunit. Forms a tight heterodimer with protein bS6.

Its function is as follows. Binds as a heterodimer with protein bS6 to the central domain of the 16S rRNA, where it helps stabilize the platform of the 30S subunit. The protein is Small ribosomal subunit protein bS18B of Mycobacterium marinum (strain ATCC BAA-535 / M).